The following is a 274-amino-acid chain: 2,3,4,5-tetrahydropyridine-2,6-dicarboxylate N-succinyltransferase (274 aa).

Substrate-binding residues include Arg-104 and Asp-141.

The protein belongs to the transferase hexapeptide repeat family. As to quaternary structure, homotrimer.

It localises to the cytoplasm. It carries out the reaction (S)-2,3,4,5-tetrahydrodipicolinate + succinyl-CoA + H2O = (S)-2-succinylamino-6-oxoheptanedioate + CoA. It functions in the pathway amino-acid biosynthesis; L-lysine biosynthesis via DAP pathway; LL-2,6-diaminopimelate from (S)-tetrahydrodipicolinate (succinylase route): step 1/3. The protein is 2,3,4,5-tetrahydropyridine-2,6-dicarboxylate N-succinyltransferase of Shewanella sp. (strain ANA-3).